Reading from the N-terminus, the 399-residue chain is Subtilisin-like protease CPC735_033790 (399 aa).

Positions methionine 1 to alanine 20 are cleaved as a signal peptide. Residues glycine 21–threonine 117 constitute a propeptide that is removed on maturation. The region spanning serine 37–isoleucine 116 is the Inhibitor I9 domain. A glycan (N-linked (GlcNAc...) asparagine) is linked at asparagine 115. The Peptidase S8 domain maps to serine 127 to valine 399. Residues aspartate 159 and histidine 190 each act as charge relay system in the active site. An N-linked (GlcNAc...) asparagine glycan is attached at asparagine 251. The active-site Charge relay system is serine 345. Residue asparagine 395 is glycosylated (N-linked (GlcNAc...) asparagine).

It belongs to the peptidase S8 family.

The protein resides in the secreted. In terms of biological role, secreted subtilisin-like serine protease with keratinolytic activity that contributes to pathogenicity. The polypeptide is Subtilisin-like protease CPC735_033790 (Coccidioides posadasii (strain C735) (Valley fever fungus)).